Here is a 261-residue protein sequence, read N- to C-terminus: Segregation and condensation protein A (261 aa).

This sequence belongs to the ScpA family. Component of a cohesin-like complex composed of ScpA, ScpB and the Smc homodimer, in which ScpA and ScpB bind to the head domain of Smc. The presence of the three proteins is required for the association of the complex with DNA.

It localises to the cytoplasm. In terms of biological role, participates in chromosomal partition during cell division. May act via the formation of a condensin-like complex containing Smc and ScpB that pull DNA away from mid-cell into both cell halves. This is Segregation and condensation protein A from Leptospira interrogans serogroup Icterohaemorrhagiae serovar copenhageni (strain Fiocruz L1-130).